A 444-amino-acid chain; its full sequence is 23S rRNA (uracil(1939)-C(5))-methyltransferase RlmD (444 aa).

The 63-residue stretch at 5–67 (RNRFDRTPFQ…RHFDEAKTVE (63 aa)) folds into the TRAM domain. 4 residues coordinate [4Fe-4S] cluster: Cys-80, Cys-86, Cys-89, and Cys-168. S-adenosyl-L-methionine contacts are provided by Gln-276, Phe-305, Asn-310, Glu-326, Asp-353, and Asp-374. The Nucleophile role is filled by Cys-400.

It belongs to the class I-like SAM-binding methyltransferase superfamily. RNA M5U methyltransferase family. RlmD subfamily.

The catalysed reaction is uridine(1939) in 23S rRNA + S-adenosyl-L-methionine = 5-methyluridine(1939) in 23S rRNA + S-adenosyl-L-homocysteine + H(+). In terms of biological role, catalyzes the formation of 5-methyl-uridine at position 1939 (m5U1939) in 23S rRNA. This Xanthomonas oryzae pv. oryzae (strain MAFF 311018) protein is 23S rRNA (uracil(1939)-C(5))-methyltransferase RlmD.